The following is a 295-amino-acid chain: NAD kinase (295 aa).

D74 acts as the Proton acceptor in catalysis. NAD(+) is bound by residues 74 to 75 (DG), 148 to 149 (NE), R176, D178, and 189 to 194 (TAYAMS).

This sequence belongs to the NAD kinase family. A divalent metal cation serves as cofactor.

The protein resides in the cytoplasm. The catalysed reaction is NAD(+) + ATP = ADP + NADP(+) + H(+). Functionally, involved in the regulation of the intracellular balance of NAD and NADP, and is a key enzyme in the biosynthesis of NADP. Catalyzes specifically the phosphorylation on 2'-hydroxyl of the adenosine moiety of NAD to yield NADP. The chain is NAD kinase from Acidithiobacillus ferrooxidans (strain ATCC 23270 / DSM 14882 / CIP 104768 / NCIMB 8455) (Ferrobacillus ferrooxidans (strain ATCC 23270)).